Consider the following 412-residue polypeptide: Flap endonuclease 1-B (412 aa).

Residues 1-105 form an N-domain region; that stretch reads MGIKGLTKLL…KELAKRSLKR (105 aa). Residue aspartate 34 participates in Mg(2+) binding. A DNA-binding site is contributed by arginine 71. Mg(2+) is bound by residues aspartate 87, glutamate 159, glutamate 161, aspartate 180, and aspartate 182. An I-domain region spans residues 123–254; sequence LIEKFSKRTV…QRALKLIRQH (132 aa). Glutamate 159 provides a ligand contact to DNA. DNA is bound by residues glycine 232 and aspartate 234. Residue aspartate 234 participates in Mg(2+) binding.

It belongs to the XPG/RAD2 endonuclease family. FEN1 subfamily. Interacts with PCNA. Three molecules of FEN1 bind to one PCNA trimer with each molecule binding to one PCNA monomer. PCNA stimulates the nuclease activity without altering cleavage specificity. Requires Mg(2+) as cofactor. Phosphorylated. Phosphorylation upon DNA damage induces relocalization to the nuclear plasma.

The protein localises to the nucleus. It localises to the nucleolus. It is found in the nucleoplasm. The protein resides in the mitochondrion. Functionally, structure-specific nuclease with 5'-flap endonuclease and 5'-3' exonuclease activities involved in DNA replication and repair. During DNA replication, cleaves the 5'-overhanging flap structure that is generated by displacement synthesis when DNA polymerase encounters the 5'-end of a downstream Okazaki fragment. It enters the flap from the 5'-end and then tracks to cleave the flap base, leaving a nick for ligation. Also involved in the long patch base excision repair (LP-BER) pathway, by cleaving within the apurinic/apyrimidinic (AP) site-terminated flap. Acts as a genome stabilization factor that prevents flaps from equilibrating into structures that lead to duplications and deletions. Also possesses 5'-3' exonuclease activity on nicked or gapped double-stranded DNA, and exhibits RNase H activity. Also involved in replication and repair of rDNA and in repairing mitochondrial DNA. This chain is Flap endonuclease 1-B, found in Oryza sativa subsp. indica (Rice).